We begin with the raw amino-acid sequence, 162 residues long: UPF0305 protein MmarC6_0221 (162 aa).

Belongs to the UPF0305 family.

The sequence is that of UPF0305 protein MmarC6_0221 from Methanococcus maripaludis (strain C6 / ATCC BAA-1332).